The primary structure comprises 266 residues: Orotidine 5'-phosphate decarboxylase (266 aa).

Substrate-binding positions include Asp37, 59-61 (KTH), 91-100 (DRKFADIGNT), Tyr217, and Arg235. Lys93 (proton donor) is an active-site residue.

Belongs to the OMP decarboxylase family.

The catalysed reaction is orotidine 5'-phosphate + H(+) = UMP + CO2. It functions in the pathway pyrimidine metabolism; UMP biosynthesis via de novo pathway; UMP from orotate: step 2/2. The sequence is that of Orotidine 5'-phosphate decarboxylase (URA3) from Cyberlindnera jadinii (Torula yeast).